The primary structure comprises 195 residues: MKRFARKETIYLRGEEARTLYRLEEGLVRVVELLPDGRLITLRHVLPGDYFGEEALEGKAYRYTAEAMTEAVVQGLDPRAMDHEALHRVARNLARQMRRVQAYEAHLQTGELRARIARYLLFLADTPLSARDRQGIYVTVSHEEIADATASIRESVSKVLADLRREGLIATAYRRVYLLDLAALEREAGSALEAA.

The HTH crp-type domain maps to 110-182; that stretch reads GELRARIARY…YRRVYLLDLA (73 aa). The segment at residues 142–161 is a DNA-binding region (H-T-H motif); sequence HEEIADATASIRESVSKVLA.

Functionally, activates transcription. Positively regulates PcrtB promoter upstream of the crtB operon in a cAMP-independent manner. Regulated genes include genes encoding DNA photolyase, phytoene synthase and cytochrome P450 monooxygenase, which are involved in carotenoid biosynthesis. Positively regulates the light-inducible gene cluster in the megaplasmid in a cAMP-independent manner. This chain is Transcriptional regulator LdrP, found in Thermus thermophilus (strain ATCC BAA-163 / DSM 7039 / HB27).